The chain runs to 227 residues: Lipoprotein-releasing system ATP-binding protein LolD (227 aa).

The region spanning 7–227 (LSCRNLGKSY…RLEGGRLVEA (221 aa)) is the ABC transporter domain. 43-50 (GTSGSGKS) provides a ligand contact to ATP.

The protein belongs to the ABC transporter superfamily. Lipoprotein translocase (TC 3.A.1.125) family. The complex is composed of two ATP-binding proteins (LolD) and two transmembrane proteins (LolC and LolE).

The protein resides in the cell inner membrane. In terms of biological role, part of the ABC transporter complex LolCDE involved in the translocation of mature outer membrane-directed lipoproteins, from the inner membrane to the periplasmic chaperone, LolA. Responsible for the formation of the LolA-lipoprotein complex in an ATP-dependent manner. The chain is Lipoprotein-releasing system ATP-binding protein LolD from Pseudomonas syringae pv. tomato (strain ATCC BAA-871 / DC3000).